We begin with the raw amino-acid sequence, 89 residues long: Small ribosomal subunit protein uS15 (89 aa).

The protein belongs to the universal ribosomal protein uS15 family. Part of the 30S ribosomal subunit. Forms a bridge to the 50S subunit in the 70S ribosome, contacting the 23S rRNA.

In terms of biological role, one of the primary rRNA binding proteins, it binds directly to 16S rRNA where it helps nucleate assembly of the platform of the 30S subunit by binding and bridging several RNA helices of the 16S rRNA. Functionally, forms an intersubunit bridge (bridge B4) with the 23S rRNA of the 50S subunit in the ribosome. This is Small ribosomal subunit protein uS15 from Shewanella piezotolerans (strain WP3 / JCM 13877).